A 47-amino-acid polypeptide reads, in one-letter code: Zinc-finger protein TK0143 (47 aa).

The C2H2-type zinc-finger motif lies at 18–41 (FRCPRCGMVFRSAKAYTRHVNKAH). Zn(2+) contacts are provided by Cys-20, Cys-23, His-36, and His-41.

Crystallized in association with 70S ribosomes. The cofactor is Zn(2+).

The chain is Zinc-finger protein TK0143 from Thermococcus kodakarensis (strain ATCC BAA-918 / JCM 12380 / KOD1) (Pyrococcus kodakaraensis (strain KOD1)).